A 229-amino-acid polypeptide reads, in one-letter code: Large ribosomal subunit protein uL1 (229 aa).

Belongs to the universal ribosomal protein uL1 family. As to quaternary structure, part of the 50S ribosomal subunit.

Binds directly to 23S rRNA. The L1 stalk is quite mobile in the ribosome, and is involved in E site tRNA release. Its function is as follows. Protein L1 is also a translational repressor protein, it controls the translation of the L11 operon by binding to its mRNA. This Pasteurella multocida (strain Pm70) protein is Large ribosomal subunit protein uL1.